The primary structure comprises 98 residues: MADVTGIALGMIETRGLVPAIEAADAMTKAAEVRLVGRQFVGGGYVTVLVRGETGAVNAAVRAGADACERVGDGLVAAHIIARVHSEVENILPKAPQA.

A BMC domain is found at Ala8–Pro93.

The protein belongs to the bacterial microcompartments protein family. CsoS1 subfamily. In terms of assembly, homohexamer with a small central pore; the concave side is mostly positive electrostatic potential, whereas the convex side is mostly negative electrostatic potential. Forms a CsoS2-CsoS1-RuBisCO complex. Interacts with the N-terminus (residues 1-136) of RuBisCO (CbbL).

The protein resides in the carboxysome. Functionally, the major shell protein of the carboxysome, a polyhedral inclusion where RuBisCO (ribulose bisphosphate carboxylase, ccbL-ccbS) is sequestered. Assembles into hexamers which make sheets that form the facets of the polyhedral carboxysome. The shell probably limits the diffusion of CO(2) into and out of the carboxysome. Molecular modeling shows the central pore of this protein is selectively permeable to anions such as HCO(3) rather than CO(2) or O(2). There are estimated to be 2970 CsoS1A/CsoS1C proteins per carboxysome (the proteins differ by only 1 residue). In terms of biological role, unlike beta-carboxysomes, alpha-carboxysomes (Cb) can form without cargo protein. CsoS2 is essential for Cb formation and is also capable of targeting foreign proteins to the Cb. The Cb shell assembles with the aid of CsoS2; CsoS1A, CsoS1B and CsoS1C form the majority of the shell while CsoS4A and CsoS4B form vertices. CsoS1D forms pseudohexamers that probably control metabolite flux into and out of the shell. In Halothiobacillus neapolitanus (strain ATCC 23641 / c2) (Thiobacillus neapolitanus), this protein is Major carboxysome shell protein CsoS1A.